Consider the following 190-residue polypeptide: MLPESFFLNDDVLYLAKELLGHVLVTHLEGQRTSGIIIETEAYRGPEDKACHAYNYRKTQRNLPMYSRGGIAYIYRCYGMHSLFNVVTGHQDLPHAVLIRAILPYEGEDIMVLRRQWQNKPKHLLTNGPGKVCQALNLTLEYNTHSLSSPQIHISKKKFSGTITQKPRIGIDYAQEYRDLPWRFLLHIKN.

The protein belongs to the DNA glycosylase MPG family.

This chain is Putative 3-methyladenine DNA glycosylase, found in Chlamydia abortus (strain DSM 27085 / S26/3) (Chlamydophila abortus).